The sequence spans 433 residues: 26S proteasome regulatory subunit 7 (433 aa).

The segment at 1-22 is disordered; it reads MPDYLGADQRKTKEDEKDDKPI. Basic and acidic residues predominate over residues 8-22; that stretch reads DQRKTKEDEKDDKPI. The residue at position 116 (lysine 116) is an N6-acetyllysine. An ATP-binding site is contributed by 216–223; that stretch reads GPPGTGKT. Residue lysine 422 is modified to N6-acetyllysine.

This sequence belongs to the AAA ATPase family. In terms of assembly, component of the 19S proteasome regulatory particle complex. The 26S proteasome consists of a 20S core particle (CP) and two 19S regulatory subunits (RP). The regulatory particle is made of a lid composed of 9 subunits, a base containing 6 ATPases including PSMC2 and few additional components. Interacts with NDC80/HEC; this interaction is detected only during M phase. Interacts and SQSTM1. Interacts with PAAF1. Directly interacts with TRIM5. In terms of processing, monoubiquitinated by RNF181. Post-translationally, phosphorylated. Dephosphorylated by UBLCP1 which impairs PSMC2 ATPase activity and disrupts 26S proteasome assembly.

The protein localises to the cytoplasm. It is found in the nucleus. In terms of biological role, component of the 26S proteasome, a multiprotein complex involved in the ATP-dependent degradation of ubiquitinated proteins. This complex plays a key role in the maintenance of protein homeostasis by removing misfolded or damaged proteins, which could impair cellular functions, and by removing proteins whose functions are no longer required. Therefore, the proteasome participates in numerous cellular processes, including cell cycle progression, apoptosis, or DNA damage repair. PSMC2 belongs to the heterohexameric ring of AAA (ATPases associated with diverse cellular activities) proteins that unfolds ubiquitinated target proteins that are concurrently translocated into a proteolytic chamber and degraded into peptides. This is 26S proteasome regulatory subunit 7 (PSMC2) from Pongo abelii (Sumatran orangutan).